The sequence spans 629 residues: Pentatricopeptide repeat-containing protein At1g63150 (629 aa).

PPR repeat units lie at residues Ala46–Pro81, Ser82–His116, Asp117–Pro151, Asp152–Pro186, Asp187–Pro221, Asp222–Ala256, Asn257–Pro291, Asn292–Pro326, Asn327–Pro361, Asp362–Pro396, Asn397–Gly431, Asn432–Thr466, Asp467–Leu501, Asn502–Lys532, Asp534–Pro568, and Asn569–Gly603.

Belongs to the PPR family. P subfamily.

In Arabidopsis thaliana (Mouse-ear cress), this protein is Pentatricopeptide repeat-containing protein At1g63150.